The chain runs to 932 residues: Isoleucine--tRNA ligase (932 aa).

Positions 57–67 match the 'HIGH' region motif; that stretch reads PYANGDIHIGT. E559 provides a ligand contact to L-isoleucyl-5'-AMP. Positions 600–604 match the 'KMSKS' region motif; the sequence is KMSKS. K603 provides a ligand contact to ATP. Zn(2+)-binding residues include C899, C902, C919, and C922.

The protein belongs to the class-I aminoacyl-tRNA synthetase family. IleS type 1 subfamily. In terms of assembly, monomer. The cofactor is Zn(2+).

Its subcellular location is the cytoplasm. The catalysed reaction is tRNA(Ile) + L-isoleucine + ATP = L-isoleucyl-tRNA(Ile) + AMP + diphosphate. In terms of biological role, catalyzes the attachment of isoleucine to tRNA(Ile). As IleRS can inadvertently accommodate and process structurally similar amino acids such as valine, to avoid such errors it has two additional distinct tRNA(Ile)-dependent editing activities. One activity is designated as 'pretransfer' editing and involves the hydrolysis of activated Val-AMP. The other activity is designated 'posttransfer' editing and involves deacylation of mischarged Val-tRNA(Ile). In Caldanaerobacter subterraneus subsp. tengcongensis (strain DSM 15242 / JCM 11007 / NBRC 100824 / MB4) (Thermoanaerobacter tengcongensis), this protein is Isoleucine--tRNA ligase.